We begin with the raw amino-acid sequence, 520 residues long: Protein root UVB sensitive 4 (520 aa).

Helical transmembrane passes span Ile275–Phe295 and Leu301–Ile321.

It belongs to the RUS1 family.

It is found in the membrane. This chain is Protein root UVB sensitive 4, found in Arabidopsis thaliana (Mouse-ear cress).